Reading from the N-terminus, the 829-residue chain is Probable beta-glucosidase H (829 aa).

An N-linked (GlcNAc...) asparagine glycan is attached at Asn13. Residue Asp225 is part of the active site. N-linked (GlcNAc...) asparagine glycans are attached at residues Asn304, Asn473, Asn602, Asn627, and Asn664. One can recognise a PA14 domain in the interval 389-548; the sequence is RMLSNAVIHF…DPEQMVANAV (160 aa).

The protein belongs to the glycosyl hydrolase 3 family.

The protein localises to the secreted. It catalyses the reaction Hydrolysis of terminal, non-reducing beta-D-glucosyl residues with release of beta-D-glucose.. It participates in glycan metabolism; cellulose degradation. Its function is as follows. Beta-glucosidases are one of a number of cellulolytic enzymes involved in the degradation of cellulosic biomass. Catalyzes the last step releasing glucose from the inhibitory cellobiose. This Aspergillus fumigatus (strain ATCC MYA-4609 / CBS 101355 / FGSC A1100 / Af293) (Neosartorya fumigata) protein is Probable beta-glucosidase H (bglH).